We begin with the raw amino-acid sequence, 480 residues long: Bifunctional protein GlmU (480 aa).

The segment at 1–247 is pyrophosphorylase; sequence MATPIDVVIM…AAQVAGVNSP (247 aa). UDP-N-acetyl-alpha-D-glucosamine-binding positions include lysine 24, glutamine 86, 91-92, 113-115, glycine 150, glutamate 172, and asparagine 245; these read GT and SGD. Aspartate 115 serves as a coordination point for Mg(2+). A Mg(2+)-binding site is contributed by asparagine 245. The interval 248-268 is linker; sequence VQLAELERVYQLRQATALMEQ. Residues 269–480 are N-acetyltransferase; the sequence is GVRLADPARF…WKRPVKVSKG (212 aa). Arginine 355 and lysine 373 together coordinate UDP-N-acetyl-alpha-D-glucosamine. The active-site Proton acceptor is the histidine 385. Positions 388 and 399 each coordinate UDP-N-acetyl-alpha-D-glucosamine. Acetyl-CoA-binding positions include alanine 402, 408–409, serine 427, glycine 445, and arginine 462; that span reads NY.

In the N-terminal section; belongs to the N-acetylglucosamine-1-phosphate uridyltransferase family. The protein in the C-terminal section; belongs to the transferase hexapeptide repeat family. Homotrimer. Mg(2+) serves as cofactor.

It localises to the cytoplasm. It carries out the reaction alpha-D-glucosamine 1-phosphate + acetyl-CoA = N-acetyl-alpha-D-glucosamine 1-phosphate + CoA + H(+). It catalyses the reaction N-acetyl-alpha-D-glucosamine 1-phosphate + UTP + H(+) = UDP-N-acetyl-alpha-D-glucosamine + diphosphate. The protein operates within nucleotide-sugar biosynthesis; UDP-N-acetyl-alpha-D-glucosamine biosynthesis; N-acetyl-alpha-D-glucosamine 1-phosphate from alpha-D-glucosamine 6-phosphate (route II): step 2/2. It functions in the pathway nucleotide-sugar biosynthesis; UDP-N-acetyl-alpha-D-glucosamine biosynthesis; UDP-N-acetyl-alpha-D-glucosamine from N-acetyl-alpha-D-glucosamine 1-phosphate: step 1/1. It participates in bacterial outer membrane biogenesis; LPS lipid A biosynthesis. Catalyzes the last two sequential reactions in the de novo biosynthetic pathway for UDP-N-acetylglucosamine (UDP-GlcNAc). The C-terminal domain catalyzes the transfer of acetyl group from acetyl coenzyme A to glucosamine-1-phosphate (GlcN-1-P) to produce N-acetylglucosamine-1-phosphate (GlcNAc-1-P), which is converted into UDP-GlcNAc by the transfer of uridine 5-monophosphate (from uridine 5-triphosphate), a reaction catalyzed by the N-terminal domain. This Polaromonas sp. (strain JS666 / ATCC BAA-500) protein is Bifunctional protein GlmU.